A 361-amino-acid polypeptide reads, in one-letter code: Oxidoreductase lepF (361 aa).

The helical transmembrane segment at methionine 257–leucine 277 threads the bilayer.

This sequence belongs to the NmrA-type oxidoreductase family.

Its subcellular location is the membrane. Functionally, oxidoreductase; part of the gene cluster 23 that mediates the biosynthesis of a family of 2-pyridones known as leporins. The hybrid PKS-NRPS synthetase lepA and the enoyl reductase lepG are responsible for fusion of phenylalanine with a hexaketide and subsequent release of the stable tetramic acid precursor, pre-leporin C. Because lepA lacks a designated enoylreductase (ER) domain, the required activity is provided the enoyl reductase lepG. It is possible that the dehydrogenase lepF also participates in production of pre-leporin C. Cytochrome P450 monooxygenase lepH is then required for the ring expansion step to yield leporin C. Leporin C is then presumably further oxidized by the N-hydroxylase lepD to form leporin B. LepI may possess a function in biosynthesis upstream of lepA. Leporin B is further oxidized in the presence of ferric ion to give the leporin B trimer-iron chelate, but whether or not this reaction is catalyzed by an enzyme in the pathway or by ferric ion is not determined yet. The sequence is that of Oxidoreductase lepF from Aspergillus flavus (strain ATCC 200026 / FGSC A1120 / IAM 13836 / NRRL 3357 / JCM 12722 / SRRC 167).